Here is a 250-residue protein sequence, read N- to C-terminus: MILRIIIFVIIILVVSLLLIYFVNKKPIINTQIENYSDIKNKFKTGDIILFSCRKHNTFIDEIKYFSRTKLIGSEFGHVGLILRDKKKLYVIEFTDYEHPGDQVAKRYHDLGKGGMRVIELETALREYNKDHMGCYAVRFISQEIPNDIFYDKIKKHRHKIFESKPKLLLLAFIDMLVMHKMSSDLATIFHNEDRMTCGEFVHTVLNDCNAIADYPSKIFWPYIVEDSDFNKILRSDISYSRLVKFIFDP.

The chain crosses the membrane as a helical span at residues 2-22; that stretch reads ILRIIIFVIIILVVSLLLIYF.

The protein localises to the membrane. This is an uncharacterized protein from Acanthamoeba polyphaga (Amoeba).